The following is a 372-amino-acid chain: Cell division protein FtsZ 1 (372 aa).

GTP contacts are provided by residues 51–55 (GAGCN), 138–140 (GTG), Glu-169, Arg-173, and Asp-216. The segment covering 350 to 360 (PEEETPLETPE) has biased composition (acidic residues). The interval 350–372 (PEEETPLETPEESPSIEISIPEL) is disordered. The span at 361–372 (ESPSIEISIPEL) shows a compositional bias: low complexity.

It belongs to the FtsZ family. In terms of assembly, homodimer. Polymerizes to form a dynamic ring structure in a strictly GTP-dependent manner. Interacts directly with several other division proteins.

Its subcellular location is the cytoplasm. In terms of biological role, essential cell division protein that forms a contractile ring structure (Z ring) at the future cell division site. The regulation of the ring assembly controls the timing and the location of cell division. One of the functions of the FtsZ ring is to recruit other cell division proteins to the septum to produce a new cell wall between the dividing cells. Binds GTP and shows GTPase activity. In Pyrococcus furiosus (strain ATCC 43587 / DSM 3638 / JCM 8422 / Vc1), this protein is Cell division protein FtsZ 1.